The sequence spans 441 residues: MIGYQIYVRSFRDGNLDGVGDFRGLKNAVSYLKELGIDFVWLMPVFSSISFHGYDVVDFYSFKAEYGSEREFKEMIEAFHDSGIKVVLDLPIHHTGFLHTWFQKALKGDPHYRDYYVWANKETDLDERREWDGEKIWHPLEDGRFYRGLFGPFSPDLNYDNPQVFDEMKRLVLHLLDMGVDGFRFDAAKHMRDTIEQNVRFWKYFLSDLKGIFLAEIWAEARMVDEHGRIFGYMLNFDTSHCIKEAVWKENTRVLIESIERAVIGKDYLPVNFTSNHDMSRLASFEGGFSKEKIKLSISILFTLPGVPLVFYGDELGMKGVYQKPNTEVVLDPFPWNESMCVEGQTFWKWPAYNGPFSGISVEYQKRDPDSILSHTLGWTRFRKENQWIDRAKLEFLCKEDKFLVYRLYDDQHSLKVFHNLSGEEVVFEGVKMKPYKTEVV.

Ca(2+) is bound by residues aspartate 13, asparagine 15, aspartate 17, valine 19, and aspartate 21. The Nucleophile role is filled by aspartate 186. The Proton donor role is filled by glutamate 216.

It belongs to the glycosyl hydrolase 13 family. Monomer. Ca(2+) serves as cofactor.

Its subcellular location is the cytoplasm. It carries out the reaction Transfers a segment of a (1-&gt;4)-alpha-D-glucan to a new position in an acceptor, which may be glucose or a (1-&gt;4)-alpha-D-glucan.. The protein is 4-alpha-glucanotransferase (mgtA) of Thermotoga maritima (strain ATCC 43589 / DSM 3109 / JCM 10099 / NBRC 100826 / MSB8).